The primary structure comprises 275 residues: 2,3,4,5-tetrahydropyridine-2,6-dicarboxylate N-succinyltransferase (275 aa).

The substrate site is built by Arg-106 and Asp-143.

Belongs to the transferase hexapeptide repeat family. As to quaternary structure, homotrimer.

The protein localises to the cytoplasm. It carries out the reaction (S)-2,3,4,5-tetrahydrodipicolinate + succinyl-CoA + H2O = (S)-2-succinylamino-6-oxoheptanedioate + CoA. It participates in amino-acid biosynthesis; L-lysine biosynthesis via DAP pathway; LL-2,6-diaminopimelate from (S)-tetrahydrodipicolinate (succinylase route): step 1/3. This is 2,3,4,5-tetrahydropyridine-2,6-dicarboxylate N-succinyltransferase from Cupriavidus necator (strain ATCC 17699 / DSM 428 / KCTC 22496 / NCIMB 10442 / H16 / Stanier 337) (Ralstonia eutropha).